The chain runs to 3589 residues: D-lysergyl-peptide-synthetase subunit 1 (3589 aa).

The segment at 344 to 742 (NCHSRPDSLA…IGRKDLQVKV (399 aa)) is adenylation (A) domain 1. The region spanning 883-952 (VERRLQLLFA…KLRDLAAASS (70 aa)) is the Carrier 1 domain. Serine 915 bears the O-(pantetheine 4'-phosphoryl)serine mark. A condensation (C) domain 1 region spans residues 995–1380 (EDIYPCTSLQ…SQFQHILTQI (386 aa)). Residues 1424 to 1826 (QAKAQMQPEA…RRKDSQVKLR (403 aa)) are adenylation (A) domain 2. One can recognise a Carrier 2 domain in the interval 1974-2042 (LERELQKIWA…TIEKLAAAAV (69 aa)). O-(pantetheine 4'-phosphoryl)serine is present on serine 2006. A condensation (C) domain 2 region spans residues 2087–2509 (VEDIYPCSPI…IEMLDEEHRS (423 aa)). An adenylation (A) domain 3 region spans residues 2534 to 2929 (CLESPESPAI…GRKDDQVKIR (396 aa)). One can recognise a Carrier 3 domain in the interval 3064 to 3132 (LETRLQELVG…RLSELAVVLN (69 aa)). Serine 3096 bears the O-(pantetheine 4'-phosphoryl)serine mark. Residues 3187–3585 (TNFIALHFSQ…TYPESLVSEL (399 aa)) form a cyclization (Cyc) domain region.

This sequence belongs to the NRP synthetase family.

Its pathway is alkaloid biosynthesis; ergot alkaloid biosynthesis. Its function is as follows. D-lysergyl-peptide-synthetase subunit 1; part of the gene cluster that mediates the biosynthesis of fungal ergot alkaloid ergovaline, the predominant ergopeptine product in E.festucae var. lolii. DmaW catalyzes the first step of ergot alkaloid biosynthesis by condensing dimethylallyl diphosphate (DMAP) and tryptophan to form 4-dimethylallyl-L-tryptophan. The second step is catalyzed by the methyltransferase easF that methylates 4-dimethylallyl-L-tryptophan in the presence of S-adenosyl-L-methionine, resulting in the formation of 4-dimethylallyl-L-abrine. The catalase easC and the FAD-dependent oxidoreductase easE then transform 4-dimethylallyl-L-abrine to chanoclavine-I which is further oxidized by easD in the presence of NAD(+), resulting in the formation of chanoclavine-I aldehyde. Agroclavine dehydrogenase easG then mediates the conversion of chanoclavine-I aldehyde to agroclavine via a non-enzymatic adduct reaction: the substrate is an iminium intermediate that is formed spontaneously from chanoclavine-I aldehyde in the presence of glutathione. The presence of easA is not required to complete this reaction. Further conversion of agroclavine to paspalic acid is a two-step process involving oxidation of agroclavine to elymoclavine and of elymoclavine to paspalic acid, the second step being performed by the elymoclavine oxidase cloA. Paspalic acid is then further converted to D-lysergic acid. Ergovaline is assembled from D-lysergic acid and three different amino acids by the D-lysergyl-peptide-synthetase composed of a monomudular (lpsB) and a trimodular (lpsA) nonribosomal peptide synthetase subunit. This chain is D-lysergyl-peptide-synthetase subunit 1, found in Epichloe festucae var. lolii (Neotyphodium lolii).